The following is a 642-amino-acid chain: Sec1 family domain-containing protein 1 (642 aa).

Position 2 is an N-acetylalanine (Ala2). Ser37, Ser303, and Ser528 each carry phosphoserine.

This sequence belongs to the STXBP/unc-18/SEC1 family. In terms of assembly, interacts with STX17. Interacts with STX5A. Interacts with the COG complex via COG4.

It localises to the cytoplasm. The protein resides in the endoplasmic reticulum membrane. It is found in the golgi apparatus. Its subcellular location is the golgi stack membrane. Its function is as follows. Plays a role in SNARE-pin assembly and Golgi-to-ER retrograde transport via its interaction with COG4. Involved in vesicular transport between the endoplasmic reticulum and the Golgi. The polypeptide is Sec1 family domain-containing protein 1 (SCFD1) (Homo sapiens (Human)).